A 288-amino-acid polypeptide reads, in one-letter code: Short chain aldehyde dehydrogenase 1 (288 aa).

NAD(+) contacts are provided by residues 26–28, Asp47, 72–73, and 99–101; these read SGI, DV, and NAG. Ser153 (proton donor) is an active-site residue. Positions 153 and 166 each coordinate substrate. 3 residues coordinate NAD(+): Tyr166, Lys170, and Thr201. The Proton acceptor role is filled by Tyr166. Lys170 (proton donor/acceptor) is an active-site residue.

This sequence belongs to the short-chain dehydrogenases/reductases (SDR) family. As to quaternary structure, homodimer. Expressed in mature seeds.

The enzyme catalyses 4,5,8-trihydroxycasbene + 2 NAD(+) = jolkinol C + 2 NADH + 2 H(+). It catalyses the reaction a secondary alcohol + NAD(+) = a ketone + NADH + H(+). It carries out the reaction a primary alcohol + NAD(+) = an aldehyde + NADH + H(+). It functions in the pathway secondary metabolite biosynthesis; terpenoid biosynthesis. In terms of biological role, involved in the biosynthesis of macrocyclic lathyrane type diterpenoids (also called Euphorbia factors) natural products, including the cyclization route from casbene to jolkinol C, a precursor for ingenol mebutate that is used to treat actinic keratosis, a precancerous skin condition. Catalyzes the conversion of 4,5,8-trihydroxycasbene into jolkinol C in presence of NAD. Also mediates the formation of casbene dione derivative and 4-ketocasbene from 4-hydroxy-8-ketocasbene and 4-hydroxycasbene, respectively. Together with CYP71D445, triggers the biosynthesis of 8-ketocasbene from 8-hydroxycasbene. The chain is Short chain aldehyde dehydrogenase 1 from Euphorbia lathyris (Caper spurge).